Consider the following 243-residue polypeptide: 1-(5-phosphoribosyl)-5-[(5-phosphoribosylamino)methylideneamino] imidazole-4-carboxamide isomerase (243 aa).

The active-site Proton acceptor is Asp-8. Residue Asp-130 is the Proton donor of the active site.

Belongs to the HisA/HisF family.

It is found in the cytoplasm. It carries out the reaction 1-(5-phospho-beta-D-ribosyl)-5-[(5-phospho-beta-D-ribosylamino)methylideneamino]imidazole-4-carboxamide = 5-[(5-phospho-1-deoxy-D-ribulos-1-ylimino)methylamino]-1-(5-phospho-beta-D-ribosyl)imidazole-4-carboxamide. It functions in the pathway amino-acid biosynthesis; L-histidine biosynthesis; L-histidine from 5-phospho-alpha-D-ribose 1-diphosphate: step 4/9. This chain is 1-(5-phosphoribosyl)-5-[(5-phosphoribosylamino)methylideneamino] imidazole-4-carboxamide isomerase, found in Acinetobacter baumannii (strain SDF).